Consider the following 577-residue polypeptide: Nuclear fusion protein tht1 (577 aa).

The signal sequence occupies residues 1–29 (MKFHPTRPFGLYFEFFIIISFFFTSESTG). The Lumenal portion of the chain corresponds to 30–404 (DVESFMKYSN…MNVYFKGLSN (375 aa)). Residues asparagine 163 and asparagine 372 are each glycosylated (N-linked (GlcNAc...) asparagine). Residues 405–425 (IISSFAFIGFTLFATLSSLFF) form a helical membrane-spanning segment. The Cytoplasmic portion of the chain corresponds to 426–433 (KVLKIHRR). Residues 434 to 454 (PIIVFGSLSIIFIHIYCFKIT) form a helical membrane-spanning segment. Over 455–470 (SWVNLYGWITCTIART) the chain is Lumenal. Residues 471–491 (LSFIKLNIRTFYLTAFLCALL) form a helical membrane-spanning segment. At 492–577 (NFLRYLKYRN…ESLEQSPWWD (86 aa)) the chain is on the cytoplasmic side.

This sequence belongs to the KAR5 family. In terms of processing, N-glycosylated.

It localises to the endoplasmic reticulum membrane. The protein resides in the nucleus membrane. Functionally, required for nuclear membrane fusion during karyogamy. The protein is Nuclear fusion protein tht1 (tht1) of Schizosaccharomyces pombe (strain 972 / ATCC 24843) (Fission yeast).